A 157-amino-acid polypeptide reads, in one-letter code: Protein Smg homolog (157 aa).

The protein belongs to the Smg family.

This is Protein Smg homolog from Shewanella sediminis (strain HAW-EB3).